Reading from the N-terminus, the 70-residue chain is Large ribosomal subunit protein uL29 (70 aa).

The protein belongs to the universal ribosomal protein uL29 family.

The chain is Large ribosomal subunit protein uL29 from Gloeobacter violaceus (strain ATCC 29082 / PCC 7421).